A 380-amino-acid chain; its full sequence is Acid phosphatase-like protein XcAP-3 (380 aa).

The first 19 residues, 1-19, serve as a signal peptide directing secretion; it reads MKATILLFLVLAVVQLSTA. 3 disulfides stabilise this stretch: Cys-147/Cys-374, Cys-167/Cys-221, and Cys-347/Cys-351.

It belongs to the histidine acid phosphatase family.

The protein localises to the secreted. In terms of biological role, probably modulates blood feeding of fleas on vertebrate species by binding and sequestering different mediators involved in the host response. Binds histamine. Binds leukotriene C4. Does not bind serotonin, adrenaline, noradrenaline, leukotriene B4, leukotriene D4, leukotriene E4, ADP, and stable analogs of thromboxane A2: U-46619 and cTXA2. In Xenopsylla cheopis (Oriental rat flea), this protein is Acid phosphatase-like protein XcAP-3.